We begin with the raw amino-acid sequence, 171 residues long: MEPDNSPRKIQFTVPLLEPHLDPEAAEQIRRRRPTPATLVLTSDQSSPEIDEDRIPNSLLKSTLSMSPRQRKKMTRTTPTMKELQTMVEHHLGQQKQGEEPEGATESTGNQESCPPGIPDTGSASRPDTPGTAQKSAESNPKTQEQCGVEPRTEDSSAHMLPLDSQGASLV.

Methionine 1 carries the N-acetylmethionine modification. The disordered stretch occupies residues methionine 1–valine 171. An essential for activity region spans residues lysine 9 to phenylalanine 12. A compositionally biased stretch (basic and acidic residues) spans proline 19–isoleucine 29. A Phosphothreonine modification is found at threonine 35. Residues threonine 42–arginine 54 form an essential for activity region. 4 positions are modified to phosphoserine: serine 43, serine 46, serine 47, and serine 67. A compositionally biased stretch (polar residues) spans glycine 122–glutamine 146. Positions threonine 143–valine 171 are interaction with PPP1R15A.

Belongs to the protein phosphatase inhibitor 1 family. As to quaternary structure, interacts with PPP1R15A. In terms of processing, phosphorylation of Thr-35 is required for activity.

In terms of biological role, inhibitor of protein-phosphatase 1. This protein may be important in hormonal control of glycogen metabolism. Hormones that elevate intracellular cAMP increase I-1 activity in many tissues. I-1 activation may impose cAMP control over proteins that are not directly phosphorylated by PKA. Following a rise in intracellular calcium, I-1 is inactivated by calcineurin (or PP2B). Does not inhibit type-2 phosphatases. The chain is Protein phosphatase 1 regulatory subunit 1A (Ppp1r1a) from Mus musculus (Mouse).